The sequence spans 264 residues: Ribosomal RNA small subunit methyltransferase A (264 aa).

6 residues coordinate S-adenosyl-L-methionine: N15, I17, G42, E64, D90, and N109.

This sequence belongs to the class I-like SAM-binding methyltransferase superfamily. rRNA adenine N(6)-methyltransferase family. RsmA subfamily.

The protein localises to the cytoplasm. It carries out the reaction adenosine(1518)/adenosine(1519) in 16S rRNA + 4 S-adenosyl-L-methionine = N(6)-dimethyladenosine(1518)/N(6)-dimethyladenosine(1519) in 16S rRNA + 4 S-adenosyl-L-homocysteine + 4 H(+). Specifically dimethylates two adjacent adenosines (A1518 and A1519) in the loop of a conserved hairpin near the 3'-end of 16S rRNA in the 30S particle. May play a critical role in biogenesis of 30S subunits. The chain is Ribosomal RNA small subunit methyltransferase A from Wolbachia pipientis subsp. Culex pipiens (strain wPip).